The chain runs to 230 residues: MRVLNDTISKVINYKFTDYAILEEALTHPSVNKRNSEDQVVSYERLEFLGDSVLNMVVSVMLFKMFPEEKEGALAKRKTDLVCGSTIANVAKEIELGNFIIMNNSERCNGGKCNLKNLENSLEALIGAIYIDGGLESVEKFIIRHWEKLAKDILDPPQDPKTSLQEWTQRNKLPLPKYELVKQTGPAHNPEFTISVCIESYDKVSACAPSKKIAEQKAAELILEKIKKTT.

The RNase III domain maps to 5-134 (NDTISKVINY…LIGAIYIDGG (130 aa)). Mg(2+) is bound at residue Glu47. The active site involves Asp51. The Mg(2+) site is built by Asn120 and Glu123. Glu123 is a catalytic residue. One can recognise a DRBM domain in the interval 159-228 (DPKTSLQEWT…AELILEKIKK (70 aa)).

The protein belongs to the ribonuclease III family. As to quaternary structure, homodimer. Mg(2+) serves as cofactor.

It localises to the cytoplasm. It carries out the reaction Endonucleolytic cleavage to 5'-phosphomonoester.. Digests double-stranded RNA. Involved in the processing of primary rRNA transcript to yield the immediate precursors to the large and small rRNAs (23S and 16S). Processes some mRNAs, and tRNAs when they are encoded in the rRNA operon. Processes pre-crRNA and tracrRNA of type II CRISPR loci if present in the organism. This chain is Ribonuclease 3, found in Wolbachia pipientis subsp. Culex pipiens (strain wPip).